The chain runs to 424 residues: Endoglucanase 1 (424 aa).

Positions 1–18 (MAKFSALCSLALLGLATA) are cleaved as a signal peptide. Disulfide bonds link Cys-35–Cys-41, Cys-68–Cys-90, Cys-80–Cys-86, Cys-156–Cys-384, Cys-188–Cys-211, Cys-192–Cys-210, Cys-231–Cys-250, Cys-239–Cys-244, and Cys-255–Cys-331. Asn-76 carries an N-linked (GlcNAc...) asparagine glycan. The active-site Nucleophile is Glu-213. Glu-218 serves as the catalytic Proton donor. N-linked (GlcNAc...) asparagine glycosylation is found at Asn-271 and Asn-385.

The protein belongs to the glycosyl hydrolase 7 (cellulase C) family. Monomer.

The protein localises to the secreted. It carries out the reaction Endohydrolysis of (1-&gt;4)-beta-D-glucosidic linkages in cellulose, lichenin and cereal beta-D-glucans.. Functionally, endoglucanase that is involved in the biological conversion of cellulose to glucose. Hydrolyzes internal beta-1,4-glucosidic bonds. The protein is Endoglucanase 1 of Pyricularia oryzae (strain 70-15 / ATCC MYA-4617 / FGSC 8958) (Rice blast fungus).